Consider the following 721-residue polypeptide: MPDLLIELRSEEIPARMQRKAAGDLKKLVTDALVEAGLTYEGAREYWTPRRLTLDIRGLNARSADMREERKGPRIDANDKAIEGFLRAAGLSSISEAHVHNDPKKGDFYVAHIVRRGREAEEIVADVMPAIIRDFPWPKSMRSGAASAIPGSLRWVRPLQSIVCTFGAEHDETKVIPFEVDGIVASNITYGHRFHAPEAIAVRRFADYAEKLGKAKVVIDAERRKEIISADAHNIAFANGLELVEDEGLLEEVAGLVEWPKVLMGSFEESYLAIPSEIIRLTIKTNQKCFVTRKPGAETLSNRFILVSNIEAKDGGKEIVHGNGKVVRARLSDAAHFWKRDQGDLPDLETLAASAGKFGLDLKKPLDQRMAKLDALNVTFHAKLGTQGERVARIRSLAAALAKITGADPASVARAAVLAKADLRTEAVGEFPELQGIMGHKYAVLQGESAAVANAIEDHYKPQGPSDHVPTDPVSVSVALADKLDTLVGFWAIDERPTGSKDPYALRRAALGVIRLILEGRARLPLLPCFDVALASLKLQRPAMAADVSGDLLAFFHDRLKVYLRDLGARHDLIDAVLAPDADDLLMIARRVEALTAFITAEEGRNLLAGTKRATQILAAEEKKGTEVAASVDEELFRLDAERLLYASIKVASDGARAAIAKEDFRSAMEALSKLREPVDAFFNDVLVNDEDKAIRANRLALLGLIRSATGEVADFSKISG.

This sequence belongs to the class-II aminoacyl-tRNA synthetase family. Tetramer of two alpha and two beta subunits.

It localises to the cytoplasm. The catalysed reaction is tRNA(Gly) + glycine + ATP = glycyl-tRNA(Gly) + AMP + diphosphate. This chain is Glycine--tRNA ligase beta subunit, found in Sinorhizobium medicae (strain WSM419) (Ensifer medicae).